A 381-amino-acid chain; its full sequence is tRNA-specific 2-thiouridylase MnmA (381 aa).

ATP contacts are provided by residues 14–21 (AMSGGVDS) and M40. Catalysis depends on C108, which acts as the Nucleophile. The cysteines at positions 108 and 205 are disulfide-linked. G132 contacts ATP. An interaction with tRNA region spans residues 155–157 (KDQ). C205 acts as the Cysteine persulfide intermediate in catalysis. Residues 309 to 310 (RY) form an interaction with tRNA region.

The protein belongs to the MnmA/TRMU family.

It is found in the cytoplasm. The enzyme catalyses S-sulfanyl-L-cysteinyl-[protein] + uridine(34) in tRNA + AH2 + ATP = 2-thiouridine(34) in tRNA + L-cysteinyl-[protein] + A + AMP + diphosphate + H(+). Its function is as follows. Catalyzes the 2-thiolation of uridine at the wobble position (U34) of tRNA, leading to the formation of s(2)U34. The protein is tRNA-specific 2-thiouridylase MnmA of Deinococcus geothermalis (strain DSM 11300 / CIP 105573 / AG-3a).